Here is a 251-residue protein sequence, read N- to C-terminus: MNNRILLNIKNLDVTIGETQILNSLNLSIKPGEIHAIMGKNGSGKSTLAKVIAGHPSYKITNGQILFENQDVTEIEPEDRSHLGIFLAFQYPVEIPGVTNADFLRIAYNAKRAFDNKEELDPLSFFSFIENKISNIDLNSTFLSRNVNEGFSGGEKKKNEILQMSLLNSKLAILDETDSGLDIDALKTIAKQINSLKTQENSIILITHYQRLLDYIKPDYIHVMQKGEIIYTGGSDTAMKLEKYGYDYLNK.

The ABC transporter domain occupies 7 to 251 (LNIKNLDVTI…EKYGYDYLNK (245 aa)). 39–46 (GKNGSGKS) is an ATP binding site.

The protein belongs to the ABC transporter superfamily. Ycf16 family.

Its subcellular location is the plastid. The protein resides in the chloroplast. In Antithamnion sp. (Red alga), this protein is Probable ATP-dependent transporter ycf16 (ycf16).